Here is a 168-residue protein sequence, read N- to C-terminus: uncharacterized protein (168 aa).

Disordered stretches follow at residues 1–81 (MSSA…GRSW) and 119–150 (RDLSESASTGSENLSRKASNQSQSQGRLSTVA). Residues 7-34 (SRTSRSKATGASSSSISSSIRASPSSSS) are compositionally biased toward low complexity. Residues 43 to 67 (TRRRRRRTGRRSTKRSIISPRRRRM) show a composition bias toward basic residues. The span at 123–146 (ESASTGSENLSRKASNQSQSQGRL) shows a compositional bias: polar residues.

This is an uncharacterized protein from Human adenovirus C serotype 2 (HAdV-2).